Reading from the N-terminus, the 547-residue chain is MAKIVKFGDEARQKMLAGVNVLADAVKTTLGPKGRNVVLDKSFGAPTVTKDGVSVAKEIELEDKFENMGAQMVKEVASKASDDAGDGTTTATVLAQAIVNEGLKSVAAGMNPMDLKRGIDKAVNAAVAHIKSIAQPCEDGKSIAQVGTISANSDSHVGDIIAEAMAKVGKEGVITVEEGSGLENELDVVEGMQFDRGYLSPYFINNQESMSVEIEQPYILLVDKKISNIRELLPVLEAVAKSGKPLVIVAEDVEGEALATLVVNNMRGIVKVTACKAPGFGDRRKAMLQDIAILTGGTVISEEVGLDLESATLEHLGSAKRVTMTKENSTIVDGAGVAADIESRVAQIRAQIEETSSDYDREKLQERVAKLAGGVAVIKVGAMTEVEMKEKKARVEDALHATRAAVEEGVVPGGGTALIRAAAAIADLKGDNEDQNAGIGIAIRALEAPLRQIVSNAGGEASVVADKVKNGEGNFGFNAASGEYGDMLEFGILDPAKVSRTAIQAAGSIAGLMITTEAMIADKPSEGGAAAPDMGGMGGMGGMGGMM.

ATP is bound by residues 29 to 32 (TLGP), lysine 50, 86 to 90 (DGTTT), glycine 414, 478 to 480 (NAA), and aspartate 494.

It belongs to the chaperonin (HSP60) family. Forms a cylinder of 14 subunits composed of two heptameric rings stacked back-to-back. Interacts with the co-chaperonin GroES.

The protein resides in the cytoplasm. The catalysed reaction is ATP + H2O + a folded polypeptide = ADP + phosphate + an unfolded polypeptide.. Together with its co-chaperonin GroES, plays an essential role in assisting protein folding. The GroEL-GroES system forms a nano-cage that allows encapsulation of the non-native substrate proteins and provides a physical environment optimized to promote and accelerate protein folding. This chain is Chaperonin GroEL, found in Saccharophagus degradans (strain 2-40 / ATCC 43961 / DSM 17024).